We begin with the raw amino-acid sequence, 420 residues long: Dihydrolipoyllysine-residue succinyltransferase component of 2-oxoglutarate dehydrogenase complex (420 aa).

The 76-residue stretch at 1 to 76 (MAEVKVPELA…EVGQAVAVVG (76 aa)) folds into the Lipoyl-binding domain. An N6-lipoyllysine modification is found at Lys-42. The tract at residues 75-199 (VGEGQVNTSN…IREKMSRRKK (125 aa)) is disordered. Residues 81-90 (NTSNDSSNES) are compositionally biased toward polar residues. Positions 91–102 (SQKDEAKEKETP) are enriched in basic and acidic residues. A compositionally biased stretch (polar residues) spans 103–127 (KQSNPNSSESENTQDNSQQRINATP). Residues 124–160 (NATPSARRHARKNGVDLSEVSGKGNDVLRKDDVENSQ) enclose the Peripheral subunit-binding (PSBD) domain. Basic and acidic residues predominate over residues 149–158 (DVLRKDDVEN). Low complexity predominate over residues 159 to 174 (SQKSSSQTAKSESKSQ). A compositionally biased stretch (polar residues) spans 175-186 (NSGSKQTNNNPS). Catalysis depends on residues His-391 and Asp-395.

This sequence belongs to the 2-oxoacid dehydrogenase family. Forms a 24-polypeptide structural core with octahedral symmetry. Part of the 2-oxoglutarate dehydrogenase (OGDH) complex composed of E1 (2-oxoglutarate dehydrogenase), E2 (dihydrolipoamide succinyltransferase) and E3 (dihydrolipoamide dehydrogenase); the complex contains multiple copies of the three enzymatic components (E1, E2 and E3). (R)-lipoate is required as a cofactor.

It catalyses the reaction N(6)-[(R)-dihydrolipoyl]-L-lysyl-[protein] + succinyl-CoA = N(6)-[(R)-S(8)-succinyldihydrolipoyl]-L-lysyl-[protein] + CoA. Its pathway is amino-acid degradation; L-lysine degradation via saccharopine pathway; glutaryl-CoA from L-lysine: step 6/6. In terms of biological role, E2 component of the 2-oxoglutarate dehydrogenase (OGDH) complex which catalyzes the second step in the conversion of 2-oxoglutarate to succinyl-CoA and CO(2). In Staphylococcus epidermidis (strain ATCC 35984 / DSM 28319 / BCRC 17069 / CCUG 31568 / BM 3577 / RP62A), this protein is Dihydrolipoyllysine-residue succinyltransferase component of 2-oxoglutarate dehydrogenase complex (odhB).